We begin with the raw amino-acid sequence, 270 residues long: SAGA-associated factor 29 homolog A (270 aa).

Residue Ser-2 is modified to N-acetylserine. Residues 85 to 113 (LPSGPTGQQRRKLEGNEQKRKRMKVDTDV) are disordered. Basic and acidic residues predominate over residues 95 to 113 (RKLEGNEQKRKRMKVDTDV). The region spanning 125–270 (EAYASLKGEQ…VVALPEGHRQ (146 aa)) is the SGF29 C-terminal domain. Histone H3K4me3 N-terminus binding stretches follow at residues 168–170 (DEE) and 217–220 (GTTA). Residues 242 to 245 (FDDD) form a histone H3K4me3 binding region.

The protein belongs to the SGF29 family. In terms of tissue distribution, expressed in roots, rosette leaves, cauline leaves, stems and flowers.

It localises to the nucleus. Its function is as follows. Chromatin reader component of the transcription regulatory histone acetylation (HAT) complex SAGA. Involved in salt stress tolerance. Enhances the effect of ADA2B in the positive regulation of salt-induced gene expression. The polypeptide is SAGA-associated factor 29 homolog A (Arabidopsis thaliana (Mouse-ear cress)).